The following is a 563-amino-acid chain: Quinidine resistance protein 1 (563 aa).

Polar residues predominate over residues 1–10 (MTKQQTSVMR). The disordered stretch occupies residues 1 to 50 (MTKQQTSVMRNASIAKEEREGSDNNNVDRSSSDAISDNDAERSNSHSEID). The Cytoplasmic portion of the chain corresponds to 1–75 (MTKQQTSVMR…KQKMLLVVQC (75 aa)). The segment covering 23 to 33 (DNNNVDRSSSD) has biased composition (low complexity). Positions 39 to 49 (DAERSNSHSEI) are enriched in basic and acidic residues. A helical membrane pass occupies residues 76 to 96 (AFTGFFSTVAGSIYYPVLTII). At 97–108 (ERKFNITEELAN) the chain is on the extracellular side. The helical transmembrane segment at 109–129 (VTIVVYFIFQGVAPSIMGGLA) threads the bilayer. Residues 130 to 135 (DTFGRR) are Cytoplasmic-facing. Residues 136-156 (PIVLWAILAYFCACIGLACAH) traverse the membrane as a helical segment. The Extracellular portion of the chain corresponds to 157–165 (NYAQILALR). The helical transmembrane segment at 166 to 186 (CLQAAGISPVIAINSGIMGDV) threads the bilayer. Over 187–195 (TTKVERGGY) the chain is Cytoplasmic. Residues 196–216 (VGLVAGFQVVGTAFGALIGAG) traverse the membrane as a helical segment. Residues 217–224 (LSSKWGWR) lie on the Extracellular side of the membrane. The chain crosses the membrane as a helical span at residues 225–245 (AIFWFLAIGSGICLVFSTLLM). Over 246 to 296 (PETKRTLVGNGSVTPRSFLNRSLILHVGSVKKTLHLDDPDPETLEPRTSVD) the chain is Cytoplasmic. The helical transmembrane segment at 297-317 (FLAPLKILHIREIDILLSIAG) threads the bilayer. At 318 to 341 (LQFSTWTTHQTALTIVLSKKYNLS) the chain is on the extracellular side. The helical transmembrane segment at 342–362 (VAKIGLCFLPAGISTLTSIIS) threads the bilayer. The Cytoplasmic portion of the chain corresponds to 363-421 (AGRYLNWSYRTRKVKYNRWIKEQELQLMEKYKGDKNKVAELIHSNSHYAFNLVEARLHP). Residues 422-442 (AFVTLLLSSIGFTAFGWCISV) traverse the membrane as a helical segment. Over 443-445 (KTP) the chain is Extracellular. A helical transmembrane segment spans residues 446-466 (LAAVLCTSAFASLFSNCILTF). Over 467 to 481 (STTLIVDLFPSKAST) the chain is Cytoplasmic. A helical membrane pass occupies residues 482-502 (ATGCLNLFRCLLSAIFIAALT). At 503–511 (KMVEKMRYG) the chain is on the extracellular side. A helical membrane pass occupies residues 512-532 (GVFTFLSAITSSSSLLLFYLL). Residues 533–563 (KNGKQLSFDRIRANDKSAGRSVGKNSEKVST) are Cytoplasmic-facing.

This sequence belongs to the major facilitator superfamily. CAR1 family.

The protein resides in the cell membrane. Multidrug resistance transporter involved in resistance and adaptation to quinidine and ketoconazole. The sequence is that of Quinidine resistance protein 1 (QDR1) from Saccharomyces cerevisiae (strain ATCC 204508 / S288c) (Baker's yeast).